A 530-amino-acid polypeptide reads, in one-letter code: MSGNKISTLQALVFFLYRFFILRRWCHRSPKQKYQKCPSHGLHQYQDLSNHTLIFNVEGALLKSNSLFPYFMVVAFEAGGVIRSLFLLVLYPFISLMSYEMGLKTMVMLSFFGVKKESFRVGKSVLPKYFLEDVGLEMFQVLKRGGKRVAVSDLPQVMIDVFLRDYLEIEVVVGRDMKMVGGYYLGIVEDKKNLEIAFDKVVQEERLGSGRRLIGITSFNSPSHRSLFSQFCQEIYFVRNSDKKSWQTLPQDQYPKPLIFHDGRLAVKPTPLNTLVLFMWAPFAAVLAAARLVFGLNLPYSLANPFLAFSGIHLTLTVNNHNDLISADRKRGCLFVCNHRTLLDPLYISYALRKKNMKAVTYSLSRLSELLAPIKTVRLTRDRVKDGQAMEKLLSQGDLVVCPEGTTCREPYLLRFSPLFSEVCDVIVPVAIDSHVTFFYGTTASGLKAFDPIFFLLNPFPSYTVKLLDPVSGSSSSTCRGVPDNGKVNFEVANHVQHEIGNALGFECTNLTRRDKYLILAGNNGVVKKK.

Transmembrane regions (helical) follow at residues 70–90, 93–113, and 275–295; these read YFMVVAFEAGGVIRSLFLLVL, FISLMSYEMGLKTMVMLSFFG, and LVLFMWAPFAAVLAAARLVFG. An HXXXXD motif motif is present at residues 339–344; that stretch reads HRTLLD.

The protein belongs to the GPAT/DAPAT family. Weakly or not expressed in roots, leaves, seedlings, developing siliques and flower buds.

It is found in the membrane. It carries out the reaction sn-glycerol 3-phosphate + an acyl-CoA = a 1-acyl-sn-glycero-3-phosphate + CoA. It participates in phospholipid metabolism; CDP-diacylglycerol biosynthesis; CDP-diacylglycerol from sn-glycerol 3-phosphate: step 1/3. Its function is as follows. Esterifies acyl-group from acyl-ACP to the sn-1 position of glycerol-3-phosphate, an essential step in glycerolipid biosynthesis. This Arabidopsis thaliana (Mouse-ear cress) protein is Probable glycerol-3-phosphate acyltransferase 2 (GPAT2).